The sequence spans 185 residues: Ribosome-recycling factor (185 aa).

It belongs to the RRF family.

Its subcellular location is the cytoplasm. Its function is as follows. Responsible for the release of ribosomes from messenger RNA at the termination of protein biosynthesis. May increase the efficiency of translation by recycling ribosomes from one round of translation to another. The sequence is that of Ribosome-recycling factor from Corynebacterium efficiens (strain DSM 44549 / YS-314 / AJ 12310 / JCM 11189 / NBRC 100395).